A 320-amino-acid polypeptide reads, in one-letter code: L-lactate dehydrogenase (320 aa).

NAD(+) contacts are provided by residues 15–16 (FV), Asp-37, Lys-42, Tyr-68, and 82–83 (GA). Residues Gln-85, Arg-91, and 123–126 (NPVD) contribute to the substrate site. Residues 121 to 123 (ATN) and Ser-146 contribute to the NAD(+) site. 151 to 154 (DSAR) is a substrate binding site. Beta-D-fructose 1,6-bisphosphate is bound by residues Arg-156 and 168-172 (QNVHA). The active-site Proton acceptor is the His-178. Position 223 is a phosphotyrosine (Tyr-223). Thr-232 provides a ligand contact to substrate.

This sequence belongs to the LDH/MDH superfamily. LDH family. Homotetramer.

The protein localises to the cytoplasm. The enzyme catalyses (S)-lactate + NAD(+) = pyruvate + NADH + H(+). Its pathway is fermentation; pyruvate fermentation to lactate; (S)-lactate from pyruvate: step 1/1. With respect to regulation, allosterically activated by fructose 1,6-bisphosphate (FBP). Functionally, catalyzes the conversion of lactate to pyruvate. The protein is L-lactate dehydrogenase of Bacillus subtilis (strain 168).